A 91-amino-acid chain; its full sequence is Putative membrane protein insertion efficiency factor (91 aa).

The interval 66 to 91 (GGVDPVPSCGCHSDKETTPKEKSDNA) is disordered. The span at 77–91 (HSDKETTPKEKSDNA) shows a compositional bias: basic and acidic residues.

This sequence belongs to the UPF0161 family.

The protein localises to the cell inner membrane. Functionally, could be involved in insertion of integral membrane proteins into the membrane. The protein is Putative membrane protein insertion efficiency factor of Hydrogenovibrio crunogenus (strain DSM 25203 / XCL-2) (Thiomicrospira crunogena).